The following is a 112-amino-acid chain: Putative pterin-4-alpha-carbinolamine dehydratase (112 aa).

Positions M1–A30 are disordered.

Belongs to the pterin-4-alpha-carbinolamine dehydratase family.

The catalysed reaction is (4aS,6R)-4a-hydroxy-L-erythro-5,6,7,8-tetrahydrobiopterin = (6R)-L-erythro-6,7-dihydrobiopterin + H2O. The protein is Putative pterin-4-alpha-carbinolamine dehydratase of Aromatoleum aromaticum (strain DSM 19018 / LMG 30748 / EbN1) (Azoarcus sp. (strain EbN1)).